The following is a 398-amino-acid chain: MANSRRTAAIIVAGGRGLRAGGGGPKQYRTLAGQPVIYRSMQPFCTHPDVFAVQPVTSPDDIALFEQAVAGLTHRPPANGGATRQQSVYSGLEALAKDAPDIVLIHDAARAFVDAALISRAIVAAQRTGAAVPTIPVTDTIKQVNGTNDVEATPDRATLRIAQTPQAFRYDVILEAHRRAAREGRDDFTDDAAIAEWAGLTVATFEGDAANMKLTTPEDFVREESRLAALLGDIRTGTGYDVHAFGDGDHVWLCGLKVPHNRGFLAHSDGDVGLHALVDAILGALADGDIGSHFPPTDPQWKGAASDKFLKYAIDRVHARGGRIANLEVTMICERPKIGPLREAMRERIAEITGLPVSRIAVKATTSERLGFTGREEGIAATACATIRLPWGPNGLSG.

Positions 1-234 (MANSRRTAAI…SRLAALLGDI (234 aa)) are 2-C-methyl-D-erythritol 4-phosphate cytidylyltransferase. The interval 235–398 (RTGTGYDVHA…LPWGPNGLSG (164 aa)) is 2-C-methyl-D-erythritol 2,4-cyclodiphosphate synthase. A divalent metal cation is bound by residues aspartate 241 and histidine 243. 4-CDP-2-C-methyl-D-erythritol 2-phosphate contacts are provided by residues 241–243 (DVH) and 267–268 (HS). Histidine 275 is a binding site for a divalent metal cation. Residues 289 to 291 (DIG), 365 to 368 (TTSE), phenylalanine 372, and arginine 375 each bind 4-CDP-2-C-methyl-D-erythritol 2-phosphate.

It in the N-terminal section; belongs to the IspD/TarI cytidylyltransferase family. IspD subfamily. This sequence in the C-terminal section; belongs to the IspF family. The cofactor is a divalent metal cation.

The enzyme catalyses 2-C-methyl-D-erythritol 4-phosphate + CTP + H(+) = 4-CDP-2-C-methyl-D-erythritol + diphosphate. It carries out the reaction 4-CDP-2-C-methyl-D-erythritol 2-phosphate = 2-C-methyl-D-erythritol 2,4-cyclic diphosphate + CMP. The protein operates within isoprenoid biosynthesis; isopentenyl diphosphate biosynthesis via DXP pathway; isopentenyl diphosphate from 1-deoxy-D-xylulose 5-phosphate: step 2/6. It functions in the pathway isoprenoid biosynthesis; isopentenyl diphosphate biosynthesis via DXP pathway; isopentenyl diphosphate from 1-deoxy-D-xylulose 5-phosphate: step 4/6. Its function is as follows. Bifunctional enzyme that catalyzes the formation of 4-diphosphocytidyl-2-C-methyl-D-erythritol from CTP and 2-C-methyl-D-erythritol 4-phosphate (MEP) (IspD), and catalyzes the conversion of 4-diphosphocytidyl-2-C-methyl-D-erythritol 2-phosphate (CDP-ME2P) to 2-C-methyl-D-erythritol 2,4-cyclodiphosphate (ME-CPP) with a corresponding release of cytidine 5-monophosphate (CMP) (IspF). The chain is Bifunctional enzyme IspD/IspF from Rhodopseudomonas palustris (strain BisA53).